We begin with the raw amino-acid sequence, 548 residues long: Adenine deaminase (548 aa).

Belongs to the metallo-dependent hydrolases superfamily. Adenine deaminase family. It depends on Mn(2+) as a cofactor.

It catalyses the reaction adenine + H2O + H(+) = hypoxanthine + NH4(+). The chain is Adenine deaminase from Borreliella burgdorferi (strain ATCC 35210 / DSM 4680 / CIP 102532 / B31) (Borrelia burgdorferi).